The primary structure comprises 507 residues: ATP synthase subunit alpha, chloroplastic (507 aa).

ATP is bound at residue 170–177 (GDRQTGKT).

This sequence belongs to the ATPase alpha/beta chains family. In terms of assembly, F-type ATPases have 2 components, CF(1) - the catalytic core - and CF(0) - the membrane proton channel. CF(1) has five subunits: alpha(3), beta(3), gamma(1), delta(1), epsilon(1). CF(0) has four main subunits: a, b, b' and c.

It is found in the plastid. Its subcellular location is the chloroplast thylakoid membrane. It carries out the reaction ATP + H2O + 4 H(+)(in) = ADP + phosphate + 5 H(+)(out). Functionally, produces ATP from ADP in the presence of a proton gradient across the membrane. The alpha chain is a regulatory subunit. The polypeptide is ATP synthase subunit alpha, chloroplastic (Morus indica (Mulberry)).